A 461-amino-acid polypeptide reads, in one-letter code: L-seryl-tRNA(Sec) selenium transferase (461 aa).

Residue Lys-294 is modified to N6-(pyridoxal phosphate)lysine.

It belongs to the SelA family. It depends on pyridoxal 5'-phosphate as a cofactor.

Its subcellular location is the cytoplasm. The catalysed reaction is L-seryl-tRNA(Sec) + selenophosphate + H(+) = L-selenocysteinyl-tRNA(Sec) + phosphate. Its pathway is aminoacyl-tRNA biosynthesis; selenocysteinyl-tRNA(Sec) biosynthesis; selenocysteinyl-tRNA(Sec) from L-seryl-tRNA(Sec) (bacterial route): step 1/1. Functionally, converts seryl-tRNA(Sec) to selenocysteinyl-tRNA(Sec) required for selenoprotein biosynthesis. This Haemophilus influenzae (strain 86-028NP) protein is L-seryl-tRNA(Sec) selenium transferase.